We begin with the raw amino-acid sequence, 135 residues long: Galectin-1 (135 aa).

An N-acetylalanine modification is found at alanine 2. Residues 4–135 (GLVASNLNLK…DFKIKCVAFD (132 aa)) form the Galectin domain. Residues lysine 13 and lysine 29 each carry the N6-acetyllysine modification. Serine 30 is subject to Phosphoserine. A beta-D-galactoside is bound by residues 45–49 (HFNPR), histidine 53, asparagine 62, and 69–72 (WGAE). Lysine 108 carries the N6-acetyllysine; alternate modification. Lysine 108 bears the N6-succinyllysine; alternate mark. Lysine 128 carries the N6-acetyllysine modification.

As to quaternary structure, homodimer. Binds LGALS3BP. Interacts with CD2, CD3, CD4, CD6, CD7, CD43, ALCAM and CD45. Interacts with laminin (via poly-N-acetyllactosamine). Interacts with SUSD2. Interacts with cargo receptor TMED10; the interaction mediates the translocation from the cytoplasm into the ERGIC (endoplasmic reticulum-Golgi intermediate compartment) and thereby secretion. In terms of processing, the N-terminus is blocked.

It localises to the secreted. Its subcellular location is the extracellular space. The protein resides in the extracellular matrix. The protein localises to the cytoplasm. Lectin that binds beta-galactoside and a wide array of complex carbohydrates. Plays a role in regulating apoptosis, cell proliferation and cell differentiation. Inhibits CD45 protein phosphatase activity and therefore the dephosphorylation of Lyn kinase. Strong inducer of T-cell apoptosis. The polypeptide is Galectin-1 (Bubalus bubalis (Domestic water buffalo)).